The following is a 299-amino-acid chain: Nitrogenase iron protein (299 aa).

11 to 18 serves as a coordination point for ATP; that stretch reads GKGGIGKS. Position 99 (Cys-99) interacts with [4Fe-4S] cluster. Residue Arg-102 is modified to ADP-ribosylarginine; by dinitrogenase reductase ADP-ribosyltransferase. Cys-133 serves as a coordination point for [4Fe-4S] cluster.

It belongs to the NifH/BchL/ChlL family. In terms of assembly, homodimer. The cofactor is [4Fe-4S] cluster. In terms of processing, the reversible ADP-ribosylation of Arg-102 inactivates the nitrogenase reductase and regulates nitrogenase activity.

The catalysed reaction is N2 + 8 reduced [2Fe-2S]-[ferredoxin] + 16 ATP + 16 H2O = H2 + 8 oxidized [2Fe-2S]-[ferredoxin] + 2 NH4(+) + 16 ADP + 16 phosphate + 6 H(+). Its function is as follows. The key enzymatic reactions in nitrogen fixation are catalyzed by the nitrogenase complex, which has 2 components: the iron protein and the molybdenum-iron protein. The polypeptide is Nitrogenase iron protein (Rhodopseudomonas palustris (strain BisB5)).